The following is a 206-amino-acid chain: Ion-translocating oxidoreductase complex subunit G (206 aa).

Residues 9 to 29 (GITLALFAAGSTGLTAVINQM) form a helical membrane-spanning segment. At T174 the chain carries FMN phosphoryl threonine.

Belongs to the RnfG family. As to quaternary structure, the complex is composed of six subunits: RsxA, RsxB, RsxC, RsxD, RsxE and RsxG. FMN serves as cofactor.

It is found in the cell inner membrane. Its function is as follows. Part of a membrane-bound complex that couples electron transfer with translocation of ions across the membrane. Required to maintain the reduced state of SoxR. In Salmonella typhimurium (strain LT2 / SGSC1412 / ATCC 700720), this protein is Ion-translocating oxidoreductase complex subunit G.